Consider the following 224-residue polypeptide: Response regulator protein GraR (224 aa).

A Response regulatory domain is found at 2–115 (QILLVEDDNT…VLIAKLQAIY (114 aa)). At Asp51 the chain carries 4-aspartylphosphate. A DNA-binding region (ompR/PhoB-type) is located at residues 126–224 (KRTLTWQDAV…KVGKGYMAHE (99 aa)). Phosphothreonine is present on residues Thr128, Thr130, and Thr149.

Interacts with GraX. In terms of processing, phosphorylated by GraS. Phosphorylated by Stk1; phosphorylation increases the DNA-binding activity of GraR.

Its subcellular location is the cytoplasm. Functionally, member of the two-component regulatory system GraR/GraS involved in resistance against cationic antimicrobial peptides (CAMPs). Upon phosphorylation by GraS, functions as a transcription regulator by direct binding to promoter regions of target genes such as adhesins, exoproteins, transporters, toxins, and proteins involved in cell wall synthesis. Down-regulates the expression of many genes involved in RNA and amino acid synthesis or glycolysis. This Staphylococcus aureus (strain Mu50 / ATCC 700699) protein is Response regulator protein GraR (graR).